Here is a 363-residue protein sequence, read N- to C-terminus: Circumsporozoite protein (363 aa).

The N-terminal stretch at 1-22 (MKNFILLAVSSILLVDLLPTHF) is a signal peptide. The segment covering 48-57 (GAQQVRQSAS) has biased composition (polar residues). Residues 48–278 (GAQQVRQSAS…GQNNQGANAP (231 aa)) are disordered. Residues 61–96 (GLGEKPKEGADKEKKKEKGKEKEEEPKKPNENKLKQ) are compositionally biased toward basic and acidic residues. The tract at residues 80–88 (KEKEEEPKK) is required for the binding to heparan sulfate proteoglycans (HSPGs) on the surface of host hepatocytes. The region I; contains the proteolytic cleavage site stretch occupies residues 93–97 (KLKQP). Residues 98–109 (NEGQPQAQGDGA) form a 1; approximate repeat. Residues 98–241 (NEGQPQAQGD…GQPQAQGDGA (144 aa)) form a 12 X 12 AA approximate tandem repeats of N-A-G-Q-P-Q-A-Q-G-D-G-A region. 11 repeat units span residues 110-121 (NAGQPQAQGDGA), 122-133 (NAGQPQAQGDGA), 134-145 (NAGQPQAQGDGA), 146-157 (NAGQPQAQGDGA), 158-169 (NAGQPQAQGDGA), 170-181 (NAGQPQAQGDGA), 182-193 (NAGQPQAQGDGA), 194-205 (NAGQPQAQGDGA), 206-217 (NAGQPQAQGDGA), 218-229 (NAGQPQAQGDGA), and 230-241 (NAGQPQAQGDGA). A compositionally biased stretch (gly residues) spans 248-259 (RNGGGAPAGGNE). A compositionally biased stretch (low complexity) spans 260–277 (GNKQAGKGQGQNNQGANA). Residues 289–341 (KIRSSVTTEWTPCSVTCGNGVRIRRKAHAGNKKAEDLTMDDLEVEACVMDKCA) form the TSP type-1 domain. Cystine bridges form between C301/C335 and C305/C340. The O-linked (Fuc) threonine glycan is linked to T304. C340 carries GPI-anchor amidated cysteine lipidation. Residues 341–363 (AGIFNVVSNSLGLVILLVLALFN) constitute a propeptide, removed in mature form.

Belongs to the plasmodium circumsporozoite protein family. In terms of processing, during host cell invasion, proteolytically cleaved at the cell membrane in the region I by a papain-like cysteine protease of parasite origin. Cleavage is triggered by the sporozoite contact with highly sulfated heparan sulfate proteoglycans (HSPGs) present on the host hepatocyte cell surface. Cleavage exposes the TSP type-1 (TSR) domain and is required for productive invasion of host hepatocytes but not for adhesion to the host cell membrane. Cleavage is dispensable for sporozoite development in the oocyst, motility and for traversal of host and vector cells. Post-translationally, O-glycosylated; maybe by POFUT2.

The protein localises to the cell membrane. It is found in the cytoplasm. In terms of biological role, essential sporozoite protein. In the mosquito vector, required for sporozoite development in the oocyst, migration through the vector hemolymph and entry into the vector salivary glands. In the vertebrate host, required for sporozoite migration through the host dermis and infection of host hepatocytes. Binds to highly sulfated heparan sulfate proteoglycans (HSPGs) on the surface of host hepatocytes. Functionally, in the vertebrate host, binds to highly sulfated heparan sulfate proteoglycans (HSPGs) on the surface of host hepatocytes and is required for sporozoite invasion of the host hepatocytes. This Plasmodium knowlesi (strain H) protein is Circumsporozoite protein.